Reading from the N-terminus, the 291-residue chain is uncharacterized protein (291 aa).

Residues 1-58 (MDLKWLQTFIAAAESESFREAAEHLYLTQPAVSQHMRKLEDELDMRLFLHSGRRVVLT) enclose the HTH lysR-type domain. Residues 18–37 (FREAAEHLYLTQPAVSQHMR) constitute a DNA-binding region (H-T-H motif).

Belongs to the LysR transcriptional regulatory family.

This is an uncharacterized protein from Bacillus subtilis (strain 168).